Reading from the N-terminus, the 360-residue chain is Nucleoporin SEH1-A (360 aa).

WD repeat units follow at residues 10-49 (DHKD…NWHC), 55-96 (THSG…SNDK), 111-152 (DSRT…NLSQ), 160-210 (SCKL…RKYA), 217-258 (SVSD…KELS), and 276-315 (NHNS…NWKC).

The protein belongs to the WD repeat SEC13 family. Component of the Nup107-160 subcomplex of the nuclear pore complex (NPC). The Nup107-160 subcomplex includes NUP160, NUP133, NUP107, NUP98, NUP85, NUP43, NUP37, SEH1 and SEC13. Component of the GATOR2 subcomplex, composed of MIOS, SEC13, SEH1L, WDR24 and WDR59. The GATOR2 complex interacts with CASTOR1 and CASTOR2; the interaction is negatively regulated by arginine. The GATOR2 complex interacts with SESN1, SESN2 and SESN3; the interaction is negatively regulated by amino acids.

The protein localises to the chromosome. Its subcellular location is the centromere. It is found in the kinetochore. The protein resides in the nucleus. It localises to the nuclear pore complex. The protein localises to the lysosome membrane. With respect to regulation, the GATOR2 complex is negatively regulated by the upstream amino acid sensors CASTOR1 and SESN2, which sequester the GATOR2 complex in absence of amino acids. In the presence of abundant amino acids, GATOR2 is released from CASTOR1 and SESN2 and activated. In terms of biological role, component of the Nup107-160 subcomplex of the nuclear pore complex (NPC). The Nup107-160 subcomplex is required for the assembly of a functional NPC. The Nup107-160 subcomplex is also required for normal kinetochore microtubule attachment, mitotic progression and chromosome segregation. This subunit plays a role in recruitment of the Nup107-160 subcomplex to the kinetochore. As a component of the GATOR2 complex, functions as an activator of the amino acid-sensing branch of the mTORC1 signaling pathway. The GATOR2 complex indirectly activates mTORC1 through the inhibition of the GATOR1 subcomplex. GATOR2 probably acts as an E3 ubiquitin-protein ligase toward GATOR1. In the presence of abundant amino acids, the GATOR2 complex mediates ubiquitination of the NPRL2 core component of the GATOR1 complex, leading to GATOR1 inactivation. In the absence of amino acids, GATOR2 is inhibited, activating the GATOR1 complex. The sequence is that of Nucleoporin SEH1-A (seh1l-a) from Xenopus laevis (African clawed frog).